A 297-amino-acid polypeptide reads, in one-letter code: Phosphatidylglycerol--prolipoprotein diacylglyceryl transferase (297 aa).

4 helical membrane-spanning segments follow: residues 20–40 (FLTI…GLFV), 50–70 (INPL…IIGA), 105–125 (AVWE…LSII), and 133–153 (IHLK…QSIG). An a 1,2-diacyl-sn-glycero-3-phospho-(1'-sn-glycerol)-binding site is contributed by Arg-154. 3 consecutive transmembrane segments (helical) span residues 193-213 (PTFL…IFVF), 225-245 (GFIS…IEGL), and 266-286 (AQFI…FLRL).

It belongs to the Lgt family.

The protein localises to the cell inner membrane. The enzyme catalyses L-cysteinyl-[prolipoprotein] + a 1,2-diacyl-sn-glycero-3-phospho-(1'-sn-glycerol) = an S-1,2-diacyl-sn-glyceryl-L-cysteinyl-[prolipoprotein] + sn-glycerol 1-phosphate + H(+). It functions in the pathway protein modification; lipoprotein biosynthesis (diacylglyceryl transfer). Catalyzes the transfer of the diacylglyceryl group from phosphatidylglycerol to the sulfhydryl group of the N-terminal cysteine of a prolipoprotein, the first step in the formation of mature lipoproteins. The chain is Phosphatidylglycerol--prolipoprotein diacylglyceryl transferase from Prochlorococcus marinus (strain MIT 9312).